The chain runs to 619 residues: Chaperone protein DnaK (619 aa).

At T179 the chain carries Phosphothreonine; by autocatalysis. Residues 584–619 (QAKAQGAAGPQPGAQAQGQPNDGGKEDVVEAEVVDK) are disordered. The span at 585–605 (AKAQGAAGPQPGAQAQGQPND) shows a compositional bias: low complexity. Residues 606–619 (GGKEDVVEAEVVDK) show a composition bias toward basic and acidic residues.

The protein belongs to the heat shock protein 70 family.

Its function is as follows. Acts as a chaperone. This chain is Chaperone protein DnaK, found in Elusimicrobium minutum (strain Pei191).